Consider the following 331-residue polypeptide: Glycerophosphodiester phosphodiesterase 1 (331 aa).

Over 1-2 (MW) the chain is Cytoplasmic. A helical transmembrane segment spans residues 3–23 (LWEEQGGLMGPFSFLLLVLLL). The Lumenal portion of the chain corresponds to 24–254 (LTRSPFNACL…WKQSMFVALD (231 aa)). Residues 65-331 (VSAIAHRGGS…SMLEDCTPEF (267 aa)) form the GP-PDE domain. Residues Glu97 and Asp99 each coordinate Mg(2+). The N-linked (GlcNAc...) asparagine glycan is linked to Asn168. Asp174 serves as a coordination point for Mg(2+). Asn198 is a glycosylation site (N-linked (GlcNAc...) asparagine). The helical transmembrane segment at 255-275 (ILLDWSMHNILWYLCGVSAFL) threads the bilayer. Topologically, residues 276 to 331 (AQKDFISPDYVKKWSAKGIQVVAWTVNTFDEKSYYESHLGSSYITDSMLEDCTPEF) are cytoplasmic.

The protein belongs to the glycerophosphoryl diester phosphodiesterase family. Interacts with PRAF2. Interacts with RGS16. Mg(2+) serves as cofactor. N-glycosylated.

The protein resides in the cell membrane. Its subcellular location is the cytoplasmic vesicle membrane. The enzyme catalyses sn-glycero-3-phospho-1D-myo-inositol + H2O = myo-inositol + sn-glycerol 3-phosphate + H(+). It catalyses the reaction 1-O-(1Z-octadecenyl)-sn-glycero-3-phospho-(N-5Z,8Z,11Z,14Z-eicosatetraenoyl)-ethanolamine + H2O = 1-O-(1Z-octadecenyl)-sn-glycero-3-phosphate + N-(5Z,8Z,11Z,14Z-eicosatetraenoyl)-ethanolamine + H(+). It carries out the reaction 1-O-(1Z-octadecenyl)-sn-glycero-3-phospho-(N-9Z-octadecenoyl)-ethanolamine + H2O = 1-O-(1Z-octadecenyl)-sn-glycero-3-phosphate + N-(9Z-octadecenoyl) ethanolamine + H(+). The catalysed reaction is 1-O-(1Z-octadecenyl)-sn-glycero-3-phospho-N-hexadecanoyl-ethanolamine + H2O = 1-O-(1Z-octadecenyl)-sn-glycero-3-phosphate + N-hexadecanoylethanolamine + H(+). The enzyme catalyses N-(4Z,7Z,10Z,13Z,16Z,19Z)-docosahexaenoyl-sn-glycero-3-phosphoethanolamine + H2O = N-(4Z,7Z,10Z,13Z,16Z,19Z)-docosahexaenoyl ethanolamine + sn-glycerol 3-phosphate + H(+). It catalyses the reaction N-eicosanoyl-sn-glycero-3-phosphoethanolamine + H2O = N-eicosanoyl ethanolamine + sn-glycerol 3-phosphate + H(+). It carries out the reaction N-hexadecanoyl-sn-glycero-3-phosphoethanolamine + H2O = N-hexadecanoylethanolamine + sn-glycerol 3-phosphate + H(+). The catalysed reaction is N-(9Z-octadecenoyl)-sn-glycero-3-phosphoethanolamine + H2O = N-(9Z-octadecenoyl) ethanolamine + sn-glycerol 3-phosphate + H(+). The enzyme catalyses N-(5Z,8Z,11Z,14Z-eicosatetraenoyl)-sn-glycero-3-phosphoethanolamine + H2O = N-(5Z,8Z,11Z,14Z-eicosatetraenoyl)-ethanolamine + sn-glycerol 3-phosphate + H(+). Its activity is regulated as follows. Inhibited by EDTA, calcium chloride, and zinc chloride. Enhanced by magnesium chloride. Glycerophosphodiester phosphodiesterase activity can be modulated by G-protein signaling pathways. In terms of biological role, hydrolyzes the phosphodiester bond of glycerophosphodiesters such as glycerophosphoinositol (GroPIns) and glycerophosphoethanolamine (GroPEth), to yield a glycerol phosphate and an alcohol. Hydrolyzes glycerophospho-N-acylethanolamines to N-acylethanolamines in the brain and participates in bioactive N-acylethanolamine biosynthesis such as anandamide (an endocannabinoid), N-palmitoylethanolamine (an anti-inflammatory), and N-oleoylethanolamine (an anorexic). In addition, has a lysophospholipase D activity by hydrolyzing N-acyl-lysoplasmenylethanolamine (N-acyl-lysoPlsEt) to N-acylethanolamine. However lysophospholipase D activity is lower than glycerophosphodiester phosphodiesterase activity. Has little or no activity towards glycerophosphocholine. The polypeptide is Glycerophosphodiester phosphodiesterase 1 (Bos taurus (Bovine)).